Reading from the N-terminus, the 290-residue chain is Arylamine N-acetyltransferase 2 (290 aa).

Cys-68 acts as the Acyl-thioester intermediate in catalysis. Residues Ser-103 and Gly-104 each contribute to the CoA site. Substrate is bound at residue 106–107 (IH). Active-site residues include His-107 and Asp-122. Residue Tyr-208 coordinates CoA.

This sequence belongs to the arylamine N-acetyltransferase family.

Its subcellular location is the cytoplasm. The catalysed reaction is an arylamine + acetyl-CoA = an N-acetylarylamine + CoA. It catalyses the reaction an N-hydroxyarylamine + acetyl-CoA = an N-acetoxyarylamine + CoA. Its function is as follows. Catalyzes the N- or O-acetylation of various arylamine and heterocyclic amine substrates, and participates in the detoxification of a plethora of hydrazine and arylamine drugs. This is Arylamine N-acetyltransferase 2 (Nat2) from Mus musculus (Mouse).